The following is a 304-amino-acid chain: Retrotransposon Gag-like protein 4 (304 aa).

Residues 276–293 form a CCHC-type zinc finger; the sequence is QLCVYCNQAGHFTRDCLA.

In adults, expressed in brain, eye, kidney, ovary and testis. Weakly expressed in thymus, heart and muscle.

Functionally, involved in cognitive function in the brain, possibly via the noradrenergic system. This chain is Retrotransposon Gag-like protein 4, found in Mus musculus (Mouse).